Here is a 399-residue protein sequence, read N- to C-terminus: Enolase (399 aa).

Gln-152 serves as a coordination point for (2R)-2-phosphoglycerate. The active-site Proton donor is Glu-194. Residues Asp-230, Glu-273, and Asp-301 each coordinate Mg(2+). (2R)-2-phosphoglycerate is bound by residues Lys-326, Arg-355, Ser-356, and Lys-377. The Proton acceptor role is filled by Lys-326.

The protein belongs to the enolase family. The cofactor is Mg(2+).

Its subcellular location is the cytoplasm. It localises to the secreted. It is found in the cell surface. It carries out the reaction (2R)-2-phosphoglycerate = phosphoenolpyruvate + H2O. It functions in the pathway carbohydrate degradation; glycolysis; pyruvate from D-glyceraldehyde 3-phosphate: step 4/5. Catalyzes the reversible conversion of 2-phosphoglycerate (2-PG) into phosphoenolpyruvate (PEP). It is essential for the degradation of carbohydrates via glycolysis. This Methanocorpusculum labreanum (strain ATCC 43576 / DSM 4855 / Z) protein is Enolase.